We begin with the raw amino-acid sequence, 62 residues long: Small ribosomal subunit protein eS27 (62 aa).

Residues C17, C20, C36, and C39 each coordinate Zn(2+). The C4-type zinc finger occupies 17–39 (CPDCENEQLVFEKATSVVECTVC).

The protein belongs to the eukaryotic ribosomal protein eS27 family. As to quaternary structure, part of the 30S ribosomal subunit. The cofactor is Zn(2+).

This is Small ribosomal subunit protein eS27 from Methanocorpusculum labreanum (strain ATCC 43576 / DSM 4855 / Z).